Here is a 445-residue protein sequence, read N- to C-terminus: Tyrosine--tRNA ligase, mitochondrial (445 aa).

Tyrosine 33 provides a ligand contact to L-tyrosine. Aspartate 37 lines the ATP pocket. Residues proline 38–asparagine 47 carry the 'HIGH' region motif. Aspartate 77, tyrosine 184, glutamine 188, aspartate 191, and glutamine 210 together coordinate L-tyrosine. Residues lysine 245–serine 249 carry the 'KMSKS' region motif. Lysine 248 lines the ATP pocket. The S4 RNA-binding domain maps to glutamine 384–leucine 445.

Belongs to the class-I aminoacyl-tRNA synthetase family. Homodimer.

It is found in the mitochondrion matrix. It carries out the reaction tRNA(Tyr) + L-tyrosine + ATP = L-tyrosyl-tRNA(Tyr) + AMP + diphosphate + H(+). Functionally, catalyzes the attachment of tyrosine to tRNA(Tyr) in a two-step reaction: tyrosine is first activated by ATP to form Tyr-AMP and then transferred to the acceptor end of tRNA(Tyr). The protein is Tyrosine--tRNA ligase, mitochondrial of Schizosaccharomyces pombe (strain 972 / ATCC 24843) (Fission yeast).